The chain runs to 1004 residues: Glutamate [NMDA] receptor subunit 1 (1004 aa).

Positions 1–39 (MAGTDSPAAARFVYRCLLFAPAIVVGLLLPLTLPPIAAA) are cleaved as a signal peptide. Residues 40 to 585 (QRHTASDNPS…TLVSFLQPFS (546 aa)) are Extracellular-facing. 7 N-linked (GlcNAc...) asparagine glycosylation sites follow: asparagine 270, asparagine 326, asparagine 357, asparagine 409, asparagine 466, asparagine 493, and asparagine 513. Glycine-binding positions include 542–544 (PLT) and arginine 549. Residues 586 to 606 (NTLWILVMVSVHVVALVLYLL) traverse the membrane as a helical segment. Residues 607–663 (DRFSPFGRFKLSHSDSNEEKALNLSSAVWFAWGVLLNSGIGEGTPRSFSARVLGMVW) lie on the Cytoplasmic side of the membrane. The helical transmembrane segment at 664–684 (AGFAMIIVASYTANLAAFLVL) threads the bilayer. Topologically, residues 685–843 (ERPKTKLSGI…KTPNTLGLKN (159 aa)) are extracellular. N-linked (GlcNAc...) asparagine glycosylation is present at asparagine 705. Residues serine 715 and aspartate 759 each contribute to the glycine site. The chain crosses the membrane as a helical span at residues 844 to 864 (MAGVFILVGVGIAGGVGLIII). The Cytoplasmic portion of the chain corresponds to 865–1004 (EVIYKKHQVK…YTSDVSHLVV (140 aa)). The disordered stretch occupies residues 980 to 1004 (TRPQQNILPPRYSPGYTSDVSHLVV). Residues 994–1004 (GYTSDVSHLVV) are compositionally biased toward polar residues.

This sequence belongs to the glutamate-gated ion channel (TC 1.A.10.1) family. In terms of assembly, forms a heteromeric NMDA channel with Nmdar2.

The protein localises to the cell membrane. The protein resides in the postsynaptic cell membrane. It localises to the postsynaptic density. Its function is as follows. NMDA receptor subtype of glutamate-gated ion channels with high calcium permeability and voltage-dependent sensitivity to magnesium. Mediated by glycine. This protein plays a key role in synaptic plasticity, synaptogenesis, excitotoxicity, memory acquisition and learning. It mediates neuronal functions in glutamate neurotransmission. Is involved in the cell surface targeting of NMDA receptors. Plays a role in associative learning and in long-term memory consolidation. The chain is Glutamate [NMDA] receptor subunit 1 from Drosophila persimilis (Fruit fly).